Here is a 439-residue protein sequence, read N- to C-terminus: 5-hydroxybenzimidazole synthase (439 aa).

Substrate-binding positions include Met96, Tyr125, His164, 187-189 (SKG), 228-231 (NGIR), and Glu267. A Zn(2+)-binding site is contributed by His271. Tyr294 is a binding site for substrate. His335 provides a ligand contact to Zn(2+). [4Fe-4S] cluster-binding residues include Cys410, Cys413, and Cys417.

Belongs to the ThiC family. 5-hydroxybenzimidazole synthase subfamily. In terms of assembly, homodimer. [4Fe-4S] cluster is required as a cofactor.

The enzyme catalyses 5-amino-1-(5-phospho-beta-D-ribosyl)imidazole + AH2 + S-adenosyl-L-methionine = 5-hydroxybenzimidazole + 5'-deoxyadenosine + formate + L-methionine + A + NH4(+) + phosphate + 2 H(+). Its function is as follows. Catalyzes the conversion of aminoimidazole ribotide (AIR) to 5-hydroxybenzimidazole (5-HBI) in a radical S-adenosyl-L-methionine (SAM)-dependent reaction. Is thus involved in the anaerobic biosynthesis of the benzimidazole lower axial ligand of the cobamide produced by D.autotrophicum. This is 5-hydroxybenzimidazole synthase from Desulforapulum autotrophicum (strain ATCC 43914 / DSM 3382 / VKM B-1955 / HRM2) (Desulfobacterium autotrophicum).